We begin with the raw amino-acid sequence, 199 residues long: MKTLFFATSNINKINEVKQILDIPKIKIEIPQNFDIKETGKTFKENSLLKAKALFKILNNKQPVFSEDSGLCIEALNMEPGIYSKRYDQYKLGKKLDNNEKNHLIIDLMREKNNRTAYFICVISYIDVDGTINNFEGMLKGTIALNIDYYQKNGFGYDPIFLTTNNKRLSELNLEEKNKISHRGIAFDKFKKFLMQFLD.

A substrate-binding site is contributed by 8–13 (TSNINK). Aspartate 68 functions as the Proton acceptor in the catalytic mechanism. Aspartate 68 provides a ligand contact to Mg(2+). Residues serine 69, 155 to 158 (FGYD), lysine 177, and 182 to 183 (HR) contribute to the substrate site.

This sequence belongs to the HAM1 NTPase family. In terms of assembly, homodimer. Requires Mg(2+) as cofactor.

The enzyme catalyses XTP + H2O = XMP + diphosphate + H(+). It catalyses the reaction dITP + H2O = dIMP + diphosphate + H(+). The catalysed reaction is ITP + H2O = IMP + diphosphate + H(+). Its function is as follows. Pyrophosphatase that catalyzes the hydrolysis of nucleoside triphosphates to their monophosphate derivatives, with a high preference for the non-canonical purine nucleotides XTP (xanthosine triphosphate), dITP (deoxyinosine triphosphate) and ITP. Seems to function as a house-cleaning enzyme that removes non-canonical purine nucleotides from the nucleotide pool, thus preventing their incorporation into DNA/RNA and avoiding chromosomal lesions. The sequence is that of dITP/XTP pyrophosphatase from Borrelia duttonii (strain Ly).